The primary structure comprises 200 residues: Imidazoleglycerol-phosphate dehydratase (200 aa).

This sequence belongs to the imidazoleglycerol-phosphate dehydratase family.

It is found in the cytoplasm. The enzyme catalyses D-erythro-1-(imidazol-4-yl)glycerol 3-phosphate = 3-(imidazol-4-yl)-2-oxopropyl phosphate + H2O. It functions in the pathway amino-acid biosynthesis; L-histidine biosynthesis; L-histidine from 5-phospho-alpha-D-ribose 1-diphosphate: step 6/9. In Prosthecochloris aestuarii (strain DSM 271 / SK 413), this protein is Imidazoleglycerol-phosphate dehydratase.